The chain runs to 65 residues: Putative beta-neurotoxin RjAa4 (65 aa).

In terms of domain architecture, LCN-type CS-alpha/beta spans 1–64; that stretch reads KEGYPMGRDG…VWDSSTNKCG (64 aa). Intrachain disulfides connect cysteine 11/cysteine 63, cysteine 15/cysteine 37, cysteine 22/cysteine 44, and cysteine 26/cysteine 46.

This sequence belongs to the long (4 C-C) scorpion toxin superfamily. Sodium channel inhibitor family. Beta subfamily. As to expression, expressed by the venom gland.

The protein resides in the secreted. Its function is as follows. Beta toxins bind voltage-independently at site-4 of sodium channels (Nav) and shift the voltage of activation toward more negative potentials thereby affecting sodium channel activation and promoting spontaneous and repetitive firing. This is Putative beta-neurotoxin RjAa4 from Rhopalurus junceus (Caribbean blue scorpion).